Reading from the N-terminus, the 155-residue chain is MQQLSKRRLSALFVTAFLPVTAFASECSSVRFAEVGWTDITVTTALASEVLEALGYEPRVDTVSVPIAYAGIRNNDFDVFLGNWMPSMASISDPYIERGEVERLVANLEGAKYTLAVPQYVYDAGVTSVNDLAEHADQFEQRIHGIEAGNDGNEL.

Positions 1–24 (MQQLSKRRLSALFVTAFLPVTAFA) are cleaved as a signal peptide.

This is an uncharacterized protein from Chromohalobacter salexigens (strain ATCC BAA-138 / DSM 3043 / CIP 106854 / NCIMB 13768 / 1H11).